The primary structure comprises 344 residues: Endo-1,4-beta-xylanase UM03411 (344 aa).

The signal sequence occupies residues 1 to 21 (MKTNFLVLLSALLAASSAVTA). The region spanning 35-338 (QRAGSSLNAA…KPAYNAVLST (304 aa)) is the GH10 domain. Glu-166 acts as the Proton donor in catalysis. Residue Asn-171 is glycosylated (N-linked (GlcNAc...) asparagine). Residue Glu-275 is the Nucleophile of the active site. A disulfide bridge connects residues Cys-293 and Cys-299. 2 N-linked (GlcNAc...) asparagine glycosylation sites follow: Asn-310 and Asn-323.

It belongs to the glycosyl hydrolase 10 (cellulase F) family.

Its subcellular location is the secreted. The catalysed reaction is Endohydrolysis of (1-&gt;4)-beta-D-xylosidic linkages in xylans.. The protein operates within glycan degradation; xylan degradation. Its function is as follows. Endo-1,4-beta-xylanase involved in the hydrolysis of xylan, a major structural heterogeneous polysaccharide found in plant biomass representing the second most abundant polysaccharide in the biosphere, after cellulose. In Mycosarcoma maydis (Corn smut fungus), this protein is Endo-1,4-beta-xylanase UM03411.